We begin with the raw amino-acid sequence, 407 residues long: Histidine--tRNA ligase (407 aa).

Belongs to the class-II aminoacyl-tRNA synthetase family. Homodimer.

Its subcellular location is the cytoplasm. The catalysed reaction is tRNA(His) + L-histidine + ATP = L-histidyl-tRNA(His) + AMP + diphosphate + H(+). This is Histidine--tRNA ligase from Wolbachia pipientis subsp. Culex pipiens (strain wPip).